A 422-amino-acid polypeptide reads, in one-letter code: Secernin-3 (422 aa).

The propeptide occupies 1-5; the sequence is MEPCS. Cysteine 6 is an active-site residue. At cysteine 6 the chain carries Glyoxylic acid (Cys); alternate. A Pyruvic acid (Cys); alternate modification is found at cysteine 6.

It belongs to the peptidase C69 family. Secernin subfamily.

In terms of biological role, plays a role in thermal nociception. The chain is Secernin-3 (SCRN3) from Bos taurus (Bovine).